Consider the following 408-residue polypeptide: Aminomethyltransferase, mitochondrial (408 aa).

The transit peptide at 1–30 (MRGGLWQLGQSITRRLANGGDKKAVARRCF) directs the protein to the mitochondrion. 3 residues coordinate substrate: Glu235, Arg266, and Tyr404.

The protein belongs to the GcvT family. In terms of assembly, the glycine cleavage system is composed of four proteins: P, T, L and H.

Its subcellular location is the mitochondrion. The enzyme catalyses N(6)-[(R)-S(8)-aminomethyldihydrolipoyl]-L-lysyl-[protein] + (6S)-5,6,7,8-tetrahydrofolate = N(6)-[(R)-dihydrolipoyl]-L-lysyl-[protein] + (6R)-5,10-methylene-5,6,7,8-tetrahydrofolate + NH4(+). Its function is as follows. The glycine cleavage system catalyzes the degradation of glycine. The protein is Aminomethyltransferase, mitochondrial (GDCST) of Pisum sativum (Garden pea).